A 308-amino-acid polypeptide reads, in one-letter code: D-alanine--D-alanine ligase (308 aa).

In terms of domain architecture, ATP-grasp spans 102-302; it reads KTVAKSAGIP…FGALLSWMVE (201 aa). Residue 128 to 183 coordinates ATP; that stretch reads PMEPPYVVKPVAEGSSFGVVIVREGQSHPPQVLGSAEWGYGERVMVERYIPGRELT. Mg(2+)-binding residues include Asp-252, Glu-269, and Asn-271.

The protein belongs to the D-alanine--D-alanine ligase family. Mg(2+) serves as cofactor. Requires Mn(2+) as cofactor.

The protein resides in the cytoplasm. The catalysed reaction is 2 D-alanine + ATP = D-alanyl-D-alanine + ADP + phosphate + H(+). It functions in the pathway cell wall biogenesis; peptidoglycan biosynthesis. Functionally, cell wall formation. This is D-alanine--D-alanine ligase from Chelativorans sp. (strain BNC1).